Reading from the N-terminus, the 628-residue chain is Nuclear RNA export factor 1 (628 aa).

The segment at 47-83 (DTQSRYEDDDEPAVPVRASLTSASSRGRGGSSRGFGQ) is disordered. A compositionally biased stretch (low complexity) spans 63 to 72 (RASLTSASSR). An RRM domain is found at 100 to 179 (YKCRATGAAK…EFYTSKVPAP (80 aa)). 2 LRR repeats span residues 245-270 (NIVA…SIAK) and 271-294 (FVME…FAGL). Residues 365 to 526 (LVEQFVTSYF…VAVISDQLFI (162 aa)) form the NTF2 domain. The TAP-C domain maps to 576 to 628 (PIREEMIKAMCQFSGMIPPFSEKCLADCAWNFDFACQKFNEIKSSVPAEAFAH).

Belongs to the NXF family. Interacts with nucleoporins, Nup98, Nup153 and Nup214.

It is found in the nucleus. Involved in RNA export from the nucleus to the cytoplasm. This chain is Nuclear RNA export factor 1 (nxf-1), found in Caenorhabditis elegans.